The following is a 59-amino-acid chain: MNFKLIFLVALVLMAAFLGQTEGRRFKKFLKKVEGAGRRVANAAQKGLPLAAGVKGLVG.

The N-terminal stretch at 1 to 23 is a signal peptide; the sequence is MNFKLIFLVALVLMAAFLGQTEG. Residue Val58 is modified to Valine amide.

It belongs to the cecropin family.

Its subcellular location is the secreted. Cecropins have lytic and antibacterial activity against several Gram-positive and Gram-negative bacteria. This is Cecropin-C (CecC) from Anopheles gambiae (African malaria mosquito).